A 441-amino-acid chain; its full sequence is Tryptophan aminotransferase-related protein 1 (441 aa).

Pyridoxal 5'-phosphate contacts are provided by residues tyrosine 110, 152–153 (ST), asparagine 219, 239–242 (DLAY), 262–265 (TVSK), and arginine 273. An N6-(pyridoxal phosphate)lysine modification is found at lysine 265.

Belongs to the alliinase family. It depends on pyridoxal 5'-phosphate as a cofactor. Highly expressed in anthers. Expressed at low levels in ovaries.

The enzyme catalyses L-tryptophan + 2-oxoglutarate = indole-3-pyruvate + L-glutamate. It participates in plant hormone metabolism; auxin biosynthesis. Functionally, probable tryptophan aminotransferase that may be involved in the regulation of auxin production in developing rice grains. In Oryza sativa subsp. japonica (Rice), this protein is Tryptophan aminotransferase-related protein 1.